A 389-amino-acid chain; its full sequence is Teichoic acid glycerol-phosphate transferase (389 aa).

Belongs to the CDP-glycerol glycerophosphotransferase family.

The protein resides in the cell membrane. It carries out the reaction 4-O-[(2R)-glycerylphospho]-N-acetyl-beta-D-mannosaminyl-(1-&gt;4)-N-acetyl-alpha-D-glucosaminyl di-trans,octa-cis-undecaprenyl diphosphate + CDP-glycerol = 4-O-[di(2R)-glycerylphospho]-N-acetyl-beta-D-mannosaminyl-(1-&gt;4)-N-acetyl-alpha-D-glucosaminyl di-trans,octa-cis-undecaprenyl diphosphate + CMP + H(+). The protein operates within cell wall biogenesis; poly(ribitol phosphate) teichoic acid biosynthesis. Functionally, catalyzes the addition of a second glycerol phosphate unit from CDP-glycerol to the prenolpyrophosphate-linked disaccharide, to complete the linkage unit. The sequence is that of Teichoic acid glycerol-phosphate transferase (tarF) from Staphylococcus aureus (strain NCTC 8325 / PS 47).